The following is a 254-amino-acid chain: uncharacterized protein (254 aa).

This is an uncharacterized protein from Caenorhabditis elegans.